The following is a 357-amino-acid chain: Beta-hexosaminidase (357 aa).

Residues Asp72, Arg80, Arg146, and 176-177 contribute to the substrate site; that span reads KH. His189 serves as the catalytic Proton donor/acceptor. Asp260 functions as the Nucleophile in the catalytic mechanism.

It belongs to the glycosyl hydrolase 3 family. NagZ subfamily.

The protein resides in the cytoplasm. The catalysed reaction is Hydrolysis of terminal non-reducing N-acetyl-D-hexosamine residues in N-acetyl-beta-D-hexosaminides.. It functions in the pathway cell wall biogenesis; peptidoglycan recycling. In terms of biological role, plays a role in peptidoglycan recycling by cleaving the terminal beta-1,4-linked N-acetylglucosamine (GlcNAc) from peptide-linked peptidoglycan fragments, giving rise to free GlcNAc, anhydro-N-acetylmuramic acid and anhydro-N-acetylmuramic acid-linked peptides. The sequence is that of Beta-hexosaminidase from Hydrogenovibrio crunogenus (strain DSM 25203 / XCL-2) (Thiomicrospira crunogena).